Consider the following 272-residue polypeptide: Soluble interferon gamma receptor OPG193 (272 aa).

Positions 1 to 13 are cleaved as a signal peptide; sequence MRYIIILAVLFIN. 3 N-linked (GlcNAc...) asparagine; by host glycosylation sites follow: Asn-42, Asn-150, and Asn-267.

Belongs to the type II cytokine receptor family. As to quaternary structure, homodimer. Interacts with host IFNG.

The protein resides in the secreted. Counteracts the antiviral effects of host IFN-gamma. Acts as a soluble IFN-gamma receptor and thus inhibits the interaction between host IFN-gamma and its receptor. The protein is Soluble interferon gamma receptor OPG193 (OPG193) of Homo sapiens (Human).